A 179-amino-acid chain; its full sequence is Serglycin (179 aa).

The first 26 residues, 1–26, serve as a signal peptide directing secretion; that stretch reads MRQVPVGTRLVLALAFVLVWGSSVQG. The propeptide at 27 to 75 is activation peptide; the sequence is YPARRARYQWVRCKPDGIFANCIEEKGPRFDLIAEESNVGPPMTDPVLM. Cysteines 39 and 48 form a disulfide. Residues 86–145 are disordered; sequence SDDYSGSGSGSGSGSGSGSGSGSGSGSGSGSGSGSGSGSGSGSGSGSGSGSGSLADMEWE. O-linked (Xyl...) (glycosaminoglycan) serine glycosylation is found at S90 and S92. 24 tandem repeats follow at residues 90-91, 92-93, 94-95, 96-97, 98-99, 100-101, 102-103, 104-105, 106-107, 108-109, 110-111, 112-113, 114-115, 116-117, 118-119, 120-121, 122-123, 124-125, 126-127, 128-129, 130-131, 132-133, 134-135, and 136-137. A 24 X 2 AA tandem repeats of S-G region spans residues 90 to 137; that stretch reads SGSGSGSGSGSGSGSGSGSGSGSGSGSGSGSGSGSGSGSGSGSGSGSG. Positions 92 to 136 are enriched in gly residues; that stretch reads SGSGSGSGSGSGSGSGSGSGSGSGSGSGSGSGSGSGSGSGSGSGS. O-linked (Xyl...) (glycosaminoglycan) serine glycosylation is found at S96, S98, S100, S102, S104, and S106.

This sequence belongs to the serglycin family. In terms of assembly, binds to activated CD44 and to GZMB. In terms of processing, O-glycosylated; contains chondroitin sulfate and heparan sulfate.

Its subcellular location is the cytoplasmic granule. It localises to the cytolytic granule. It is found in the secreted. The protein localises to the extracellular space. The protein resides in the golgi apparatus. Functionally, plays a role in formation of mast cell secretory granules and mediates storage of various compounds in secretory vesicles. Required for storage of some proteases in both connective tissue and mucosal mast cells and for storage of granzyme B in T-lymphocytes. Plays a role in localizing neutrophil elastase in azurophil granules of neutrophils. Mediates processing of MMP2. Plays a role in cytotoxic cell granule-mediated apoptosis by forming a complex with granzyme B which is delivered to cells by perforin to induce apoptosis. Regulates the secretion of TNF-alpha and may also regulate protease secretion. Inhibits bone mineralization. This is Serglycin (Srgn) from Rattus norvegicus (Rat).